The chain runs to 282 residues: Pantothenate synthetase (282 aa).

28–35 (MGALHSGH) provides a ligand contact to ATP. The Proton donor role is filled by histidine 35. Glutamine 59 contacts (R)-pantoate. Position 59 (glutamine 59) interacts with beta-alanine. Residue 146–149 (GEKD) participates in ATP binding. Residue glutamine 152 participates in (R)-pantoate binding. Residues valine 175 and 183-186 (LSSR) each bind ATP.

It belongs to the pantothenate synthetase family. Homodimer.

The protein resides in the cytoplasm. The enzyme catalyses (R)-pantoate + beta-alanine + ATP = (R)-pantothenate + AMP + diphosphate + H(+). Its pathway is cofactor biosynthesis; (R)-pantothenate biosynthesis; (R)-pantothenate from (R)-pantoate and beta-alanine: step 1/1. Catalyzes the condensation of pantoate with beta-alanine in an ATP-dependent reaction via a pantoyl-adenylate intermediate. This is Pantothenate synthetase from Salinispora arenicola (strain CNS-205).